The chain runs to 732 residues: Outer envelope protein 80, chloroplastic (732 aa).

Disordered stretches follow at residues 1-23 (MHCHNDDVRFSSSSIRIHSPSPK) and 135-154 (ESTQSVEGKDTVQQQKGHSV). Low complexity predominate over residues 11 to 20 (SSSSIRIHSP). The POTRA domain maps to 314–396 (AEVNNISIRF…VDLIMNCVER (83 aa)).

Belongs to the OEP80 (TC 1.B.33.2) family.

It localises to the plastid. The protein resides in the chloroplast outer membrane. In terms of biological role, plays an essential role during early stages of plastid development. The chain is Outer envelope protein 80, chloroplastic (OEP80) from Arabidopsis thaliana (Mouse-ear cress).